The primary structure comprises 919 residues: MGANSRVNDDEAMPLTGHGAGSRDSIDSSSTASISLTLVDGASHTATEPSKSTNGHKSHTEGSYVNEKYHDSEEESWREDGYVPSGGKPAQRRTRIVFWLLVALCVGGWAMAFIIMATSPNNRHSTSDSSSGGSESEIVKPNTPHDGKKIPLDDVLGGMWGPVEHTISWISGPKGEDGLLLQKSEGGIGPYLHIEDVRNIHGMRANNNSIVLMKESVFFVNDERISPEKVWPSPDLKTVLAMTREKKNWRHSFTGLYWLFDVETQTAQPLDPEAPNGRVQLASWSPTSDAVVFTRDNNIYIRNLTSKAVKPITTDGGANLFYGIPDWVYEEEVFEGNSATWWSLDGKYISFLRTNETMVPEFPIDFYLSRPPGYTPEPGEEAYPYVQQIKYPKAGAPNPTVNLQFYDVEREESFSVNVDNNLKDDDRIIAEVIPASGGKMLVRETNRESYIVKVTVIDAAKREGKMVRSDNVDEIDGGWVEPSHSTTYIPSDPSAGRPHDGYIDTIIHEGYNHLAYFTPVENPKPMMLTTGNWEVVDAPSGVDLKNNVVYFVATKESPIDRHVYSVKLDGSELQMLNDSEKSAYYDVSFSNGAGYMLLKYQGPNIPWQKLISSPSNEDFYDEIIEENKNLARLSNEFSLPSLHYSTITVDGFKLPVVERRPPNFNETKKYPVLFHLYGGPGSQTVNKKFTVNFQTYVASNLGYLVVTVDGRGTGFNGRKFRCIVRRNLGYYEAHDQIQTAKEWGKKPYVDKTRIAIWGWSYGGFMTLKTLEQDAGETFQYGMAVAPVTDWRFYDSVYTERYMHMPQHNTEGYENASISNATSLSQNTRFLIMHGSADDNVHFQNTLTLLDKLDIMGMHNYDVHVFPDSNHGIYFHHAYKMVHQRLSDWLVNAFNGEWVRLRNPKPSGLKRVIRRLLHFG.

The disordered stretch occupies residues 1–89 (MGANSRVNDD…DGYVPSGGKP (89 aa)). Topologically, residues 1–95 (MGANSRVNDD…GGKPAQRRTR (95 aa)) are cytoplasmic. A compositionally biased stretch (low complexity) spans 27-38 (DSSSTASISLTL). The segment covering 44 to 55 (HTATEPSKSTNG) has biased composition (polar residues). Residues 96–116 (IVFWLLVALCVGGWAMAFIIM) form a helical; Signal-anchor for type II membrane protein membrane-spanning segment. Over 117 to 919 (ATSPNNRHST…RVIRRLLHFG (803 aa)) the chain is Vacuolar. The disordered stretch occupies residues 121-150 (NNRHSTSDSSSGGSESEIVKPNTPHDGKKI). The span at 127-136 (SDSSSGGSES) shows a compositional bias: low complexity. N-linked (GlcNAc...) asparagine glycosylation is found at N207, N303, N355, N577, and N665. Residue S760 is the Charge relay system of the active site. N-linked (GlcNAc...) asparagine glycans are attached at residues N814 and N819. Active-site charge relay system residues include D837 and H870.

The protein belongs to the peptidase S9B family.

It localises to the vacuole membrane. The catalysed reaction is Release of an N-terminal dipeptide, Xaa-Yaa-|-Zaa-, from a polypeptide, preferentially when Yaa is Pro, provided Zaa is neither Pro nor hydroxyproline.. In terms of biological role, type IV dipeptidyl-peptidase which removes N-terminal dipeptides sequentially from polypeptides having unsubstituted N-termini provided that the penultimate residue is proline. The polypeptide is Probable dipeptidyl-aminopeptidase B (DAPB) (Arthroderma otae (strain ATCC MYA-4605 / CBS 113480) (Microsporum canis)).